The chain runs to 241 residues: Protein unc-119 homolog B-B (241 aa).

Positions 1 to 46 (MSGSNREAALAGQPKDERKKSGGGVINRLKARRVQGKESGTSDQSS) are disordered. Tyr132 lines the tetradecanoate pocket.

It belongs to the PDE6D/unc-119 family.

Its subcellular location is the cell projection. It is found in the cilium. Functionally, myristoyl-binding protein that acts as a cargo adapter: specifically binds the myristoyl moiety of a subset of N-terminally myristoylated proteins and is required for their localization. Plays a key role in localization of proteins to the primary cilium membrane. This Xenopus laevis (African clawed frog) protein is Protein unc-119 homolog B-B (unc119b-b).